Here is an 85-residue protein sequence, read N- to C-terminus: Beta-insect depressant toxin Lqh-dprIT3e (85 aa).

A signal peptide spans 1-21 (MKLLLLLTISASMLIEGLVNA). Residues 22-82 (DGYIRGGDGC…EWDYETDTCG (61 aa)) form the LCN-type CS-alpha/beta domain. Cystine bridges form between Cys31-Cys81, Cys35-Cys56, Cys42-Cys63, and Cys46-Cys65. Glycine amide is present on Gly82.

It belongs to the long (4 C-C) scorpion toxin superfamily. Sodium channel inhibitor family. Beta subfamily. In terms of tissue distribution, expressed by the venom gland.

The protein resides in the secreted. Depressant insect beta-toxins cause a transient contraction paralysis followed by a slow flaccid paralysis. They bind voltage-independently at site-4 of sodium channels (Nav) and block action potentials, primarily by depolarizing the axonal membrane and suppressing the sodium current. This depressant toxin is active only on insects. It is found in a relatively small amount in the venom. The sequence is that of Beta-insect depressant toxin Lqh-dprIT3e from Leiurus hebraeus (Hebrew deathstalker scorpion).